The chain runs to 1233 residues: DNA-directed RNA polymerase subunit beta' (1233 aa).

Zn(2+) is bound by residues cysteine 61, cysteine 63, cysteine 76, and cysteine 79. Positions 455, 457, and 459 each coordinate Mg(2+). 4 residues coordinate Zn(2+): cysteine 824, cysteine 898, cysteine 905, and cysteine 908. Positions 1211–1220 are enriched in basic and acidic residues; that stretch reads ELQKAFDKEP. The segment at 1211 to 1233 is disordered; the sequence is ELQKAFDKEPASSTGNKASNSAK. Residues 1221–1233 are compositionally biased toward polar residues; sequence ASSTGNKASNSAK.

The protein belongs to the RNA polymerase beta' chain family. As to quaternary structure, the RNAP catalytic core consists of 2 alpha, 1 beta, 1 beta' and 1 omega subunit. When a sigma factor is associated with the core the holoenzyme is formed, which can initiate transcription. Requires Mg(2+) as cofactor. Zn(2+) serves as cofactor.

The catalysed reaction is RNA(n) + a ribonucleoside 5'-triphosphate = RNA(n+1) + diphosphate. In terms of biological role, DNA-dependent RNA polymerase catalyzes the transcription of DNA into RNA using the four ribonucleoside triphosphates as substrates. The polypeptide is DNA-directed RNA polymerase subunit beta' (Oenococcus oeni (strain ATCC BAA-331 / PSU-1)).